Consider the following 389-residue polypeptide: Serpentine receptor class alpha/beta-14 (389 aa).

Residues 1–45 (MPSDDFVKTARKALISHSVSIQNYTEDDCQIAFHATTNSFMQTIR) lie on the Extracellular side of the membrane. N23 is a glycosylation site (N-linked (GlcNAc...) asparagine). The helical transmembrane segment at 46 to 66 (LVHIFFCTFGAISSSLFIYVL) threads the bilayer. Residues 67–81 (LNSSSRNLHRNLRIS) are Cytoplasmic-facing. Residues 82-102 (LASLAFAALIACLQLDFIAFY) traverse the membrane as a helical segment. Residues 103 to 123 (HLALTLTADNACDSMYEARKC) are Extracellular-facing. A disulfide bridge links C123 with C198. The helical transmembrane segment at 124–144 (AILRFPVVLSIYATLCGIIVL) threads the bilayer. The Cytoplasmic portion of the chain corresponds to 145–167 (AIERTIATLKYKTYEANGSRVVG). Residues 168–188 (LVLVTGQWFVCIIVAVFSVLL) form a helical membrane-spanning segment. Topologically, residues 189–208 (RSDPGYVHYCTAYVSHPRTS) are extracellular. A helical membrane pass occupies residues 209–229 (VFSLCFMSALEVATLVYFVLL). The Cytoplasmic segment spans residues 230–268 (LQSNQRRQVNEFVNKAMHSLSERYQLQENVRIMKILIPS). A helical membrane pass occupies residues 269–289 (ITVHAILGFIGLGSMLAFAII). Over 290 to 303 (YRYADERLIVGFAP) the chain is Extracellular. The chain crosses the membrane as a helical span at residues 304–324 (FSEVVLLVIPIYAVVFPIVAV). The Cytoplasmic segment spans residues 325–389 (VQNKQLRLAS…FDLLNEMWKK (65 aa)).

This sequence belongs to the nematode receptor-like protein srab family.

It localises to the membrane. The sequence is that of Serpentine receptor class alpha/beta-14 from Caenorhabditis elegans.